A 70-amino-acid polypeptide reads, in one-letter code: Small, acid-soluble spore protein 1 (70 aa).

Belongs to the alpha/beta-type SASP family.

SASP are bound to spore DNA. They are double-stranded DNA-binding proteins that cause DNA to change to an a-like conformation. They protect the DNA backbone from chemical and enzymatic cleavage and are thus involved in dormant spore's high resistance to UV light. The sequence is that of Small, acid-soluble spore protein 1 (sasP-1) from Geobacillus stearothermophilus (Bacillus stearothermophilus).